The sequence spans 251 residues: MSQVSGQCPSRCDAPHGVPSAALDPAQTMSLLPGLEVARSTHPVEASSEEGFPEEAAPSMPHDSGLRAQQALNSIDLDVPTEAVTCQPQGNPQGCTPLLPNGSSHDHLSEPGSAGHAGNGALGGSKAHRKLQTHPSLGSQAGRKSRGSARSASQVPLQAQEGKAPAVRIHRQTASPTCCLRNAQLSGTALRSLRLESQGHRELNNKTLSQSNNKKPGVAAHAAIIPALTRPKQNCHDPSLLPGTHGVGKEF.

Disordered stretches follow at residues 1-64 (MSQV…PHDS), 84-167 (VTCQ…APAV), and 230-251 (RPKQ…GKEF). Over residues 84 to 94 (VTCQPQGNPQG) the composition is skewed to polar residues. The span at 138-154 (GSQAGRKSRGSARSASQ) shows a compositional bias: low complexity.

Belongs to the MDFI family. As to quaternary structure, interacts (via C-terminus) with AXIN1 and LEF1. Interacts with CCNT2. Interacts (via C-terminus) with Piezo channel composed of PIEZO1 or PIEZO2; the interaction prolongs Piezo channel inactivation. As to expression, in the embryo, highly expressed in the sclerotome. Also expressed in the notochord, neural tube, limb buds, heart, branchial arches and head mesenchyme. In the adult, highly expressed in skeletal muscle. Expressed at lower levels in most other tissues.

Its subcellular location is the nucleus. It is found in the cytoplasm. In terms of biological role, inhibits the transactivation activity of the Myod family of myogenic factors and represses myogenesis. Acts by associating with Myod family members and retaining them in the cytoplasm by masking their nuclear localization signals. Can also interfere with the DNA-binding activity of Myod family members. Plays an important role in trophoblast and chondrogenic differentiation. Regulates the transcriptional activity of TCF7L1/TCF3 by interacting directly with Tcf7l1/Tcf3 and preventing it from binding DNA. Binds to the axin complex, resulting in an increase in the level of free beta-catenin. Affects axin regulation of the WNT and JNK signaling pathways. Regulates the activity of mechanosensitive Piezo channel. In Mus musculus (Mouse), this protein is MyoD family inhibitor (Mdfi).